Reading from the N-terminus, the 78-residue chain is Conotoxin Cal6.3a (78 aa).

The signal sequence occupies residues 1-21 (MRFLHFLIVAVLLASFMESGA). A propeptide spanning residues 22 to 26 (MPRNP) is cleaved from the precursor. Intrachain disulfides connect Cys38–Cys49, Cys41–Cys53, and Cys48–Cys56. At Gln76 the chain carries Glutamine amide.

As to expression, expressed by the venom duct.

Its subcellular location is the secreted. Its function is as follows. Probable neurotoxin with unknown target. Possibly targets ion channels. In Californiconus californicus (California cone), this protein is Conotoxin Cal6.3a.